Consider the following 254-residue polypeptide: Small ribosomal subunit protein uS2 (254 aa).

It belongs to the universal ribosomal protein uS2 family.

This chain is Small ribosomal subunit protein uS2, found in Legionella pneumophila (strain Corby).